The following is a 193-amino-acid chain: Erythropoietin (193 aa).

Positions 1–27 (MGVHECPAWLWLLLSLLSLPLGLPVLG) are cleaved as a signal peptide. 2 disulfide bridges follow: Cys34/Cys188 and Cys56/Cys60. Asn51 is a glycosylation site (N-linked (GlcNAc...) asparagine). 2 N-linked (GlcNAc...) asparagine glycosylation sites follow: Asn65 and Asn110. Ser153 carries O-linked (GalNAc...) serine glycosylation.

It belongs to the EPO/TPO family. In terms of tissue distribution, produced by kidney or liver of adult mammals and by liver of fetal or neonatal mammals.

It is found in the secreted. In terms of biological role, hormone involved in the regulation of erythrocyte proliferation and differentiation and the maintenance of a physiological level of circulating erythrocyte mass. Binds to EPOR leading to EPOR dimerization and JAK2 activation thereby activating specific downstream effectors, including STAT1 and STAT3. This chain is Erythropoietin (EPO), found in Homo sapiens (Human).